Reading from the N-terminus, the 381-residue chain is MAVRLPRGFRAGATRAGIKPSGRPDLALLVSGLPAAWAYAATQNRAAAPSIHRGRALYASGKPLRAVVVNAGNANCATGERGYEDDRRMAELAALRLGLSPEEVLTASTGVIGVPLPVEKIAKGLPEIGLTPFAEAFAEAILTTDTRPKVAEAEVAGARIVGLAKGSGMIHPNMATMLAFLVTDALVPQEALRAGWRRVVERTFNQVTVDGDTSTNDLALLMANGAYGEVPLKAFFEGVEAVAQELARMIARDGEGATKLMVVRVVGAATEEEARRAARAIAGSALWKSALYGNDPNWGRILAALGNSGARFDPLRVRIVLQGIPLYEGAVLPFDREEAGQAMRAEEVEVLVDLREGQGAGEAYGCDLTEDYVRINALYTT.

Residues T143, K165, T176, E255, N376, and T381 each coordinate substrate. T176 functions as the Nucleophile in the catalytic mechanism.

It belongs to the ArgJ family. Heterotetramer of two alpha and two beta chains.

The protein resides in the cytoplasm. It catalyses the reaction N(2)-acetyl-L-ornithine + L-glutamate = N-acetyl-L-glutamate + L-ornithine. The enzyme catalyses L-glutamate + acetyl-CoA = N-acetyl-L-glutamate + CoA + H(+). The protein operates within amino-acid biosynthesis; L-arginine biosynthesis; L-ornithine and N-acetyl-L-glutamate from L-glutamate and N(2)-acetyl-L-ornithine (cyclic): step 1/1. Its pathway is amino-acid biosynthesis; L-arginine biosynthesis; N(2)-acetyl-L-ornithine from L-glutamate: step 1/4. In terms of biological role, catalyzes two activities which are involved in the cyclic version of arginine biosynthesis: the synthesis of N-acetylglutamate from glutamate and acetyl-CoA as the acetyl donor, and of ornithine by transacetylation between N(2)-acetylornithine and glutamate. The protein is Arginine biosynthesis bifunctional protein ArgJ of Thermus thermophilus (strain ATCC BAA-163 / DSM 7039 / HB27).